The primary structure comprises 805 residues: Sucrose synthase (805 aa).

Positions 275–752 are GT-B glycosyltransferase; sequence MVFNVVILSP…GLKRIQEKYT (478 aa).

Belongs to the glycosyltransferase 1 family. Plant sucrose synthase subfamily.

The catalysed reaction is an NDP-alpha-D-glucose + D-fructose = a ribonucleoside 5'-diphosphate + sucrose + H(+). Functionally, sucrose-cleaving enzyme that provides UDP-glucose and fructose for various metabolic pathways. The sequence is that of Sucrose synthase from Solanum tuberosum (Potato).